The sequence spans 114 residues: Large ribosomal subunit protein bL19 (114 aa).

It belongs to the bacterial ribosomal protein bL19 family.

In terms of biological role, this protein is located at the 30S-50S ribosomal subunit interface and may play a role in the structure and function of the aminoacyl-tRNA binding site. This Listeria innocua serovar 6a (strain ATCC BAA-680 / CLIP 11262) protein is Large ribosomal subunit protein bL19 (rplS).